The following is a 250-amino-acid chain: UPF0524 protein C3orf70 homolog (250 aa).

The tract at residues 201–250 (ESCDEDTEEGAELSSEEDYSPESSWEPDECTLLSPSQSDLEVIETIETTV) is disordered. Acidic residues predominate over residues 202 to 229 (SCDEDTEEGAELSSEEDYSPESSWEPDE).

This sequence belongs to the UPF0524 family.

May play a role in neuronal and neurobehavioral development. This Bos taurus (Bovine) protein is UPF0524 protein C3orf70 homolog.